We begin with the raw amino-acid sequence, 336 residues long: Fructose-1,6-bisphosphatase class 1 (336 aa).

Mg(2+)-binding residues include glutamate 92, aspartate 115, leucine 117, and aspartate 118. Residues 118-121 (DGSS), asparagine 211, tyrosine 244, 262-264 (YLY), and lysine 274 contribute to the substrate site. Glutamate 280 contributes to the Mg(2+) binding site.

This sequence belongs to the FBPase class 1 family. Homotetramer. It depends on Mg(2+) as a cofactor.

It localises to the cytoplasm. It catalyses the reaction beta-D-fructose 1,6-bisphosphate + H2O = beta-D-fructose 6-phosphate + phosphate. It participates in carbohydrate biosynthesis; gluconeogenesis. The protein is Fructose-1,6-bisphosphatase class 1 of Aliivibrio fischeri (strain MJ11) (Vibrio fischeri).